The sequence spans 180 residues: MGNFHATTIFAVHHNGECAMAGDGQVTMGNAVVMKHTARKVRKLFQGKVLAGFAGSVADAFTLFEMFEGKLEEYNGNLQRAAVEMAKQWRGDKMLRQLEAMLIVMDKTTMLLVSGTGEVIEPDDGILAIGSGGNYALSAGRALKQYASEHLTAKQIAKASLDIAGDICVYTNHNIIVEEL.

Residue threonine 7 is part of the active site. Positions 165, 168, and 171 each coordinate Na(+).

The protein belongs to the peptidase T1B family. HslV subfamily. In terms of assembly, a double ring-shaped homohexamer of HslV is capped on each side by a ring-shaped HslU homohexamer. The assembly of the HslU/HslV complex is dependent on binding of ATP.

The protein localises to the cytoplasm. The enzyme catalyses ATP-dependent cleavage of peptide bonds with broad specificity.. With respect to regulation, allosterically activated by HslU binding. Its function is as follows. Protease subunit of a proteasome-like degradation complex believed to be a general protein degrading machinery. The sequence is that of ATP-dependent protease subunit HslV from Bacillus cereus (strain ATCC 10987 / NRS 248).